The primary structure comprises 290 residues: Cilia- and flagella-associated protein 298 (290 aa).

Tyr264 bears the Phosphotyrosine mark.

This sequence belongs to the CFAP298 family. As to quaternary structure, interacts with ZMYND10.

It localises to the cytoplasm. Its subcellular location is the cytoskeleton. The protein resides in the cilium basal body. Functionally, plays a role in motile cilium function, possibly by acting on outer dynein arm assembly. Seems to be important for initiation rather than maintenance of cilium motility. Required for correct positioning of the cilium at the apical cell surface, suggesting an additional role in the planar cell polarity (PCP) pathway. May suppress canonical Wnt signaling activity. The polypeptide is Cilia- and flagella-associated protein 298 (Homo sapiens (Human)).